The chain runs to 1071 residues: DNA-directed RNA polymerase subunit beta (1071 aa).

This sequence belongs to the RNA polymerase beta chain family. In plastids the minimal PEP RNA polymerase catalytic core is composed of four subunits: alpha, beta, beta', and beta''. When a (nuclear-encoded) sigma factor is associated with the core the holoenzyme is formed, which can initiate transcription.

Its subcellular location is the plastid. It localises to the chloroplast. It catalyses the reaction RNA(n) + a ribonucleoside 5'-triphosphate = RNA(n+1) + diphosphate. Its function is as follows. DNA-dependent RNA polymerase catalyzes the transcription of DNA into RNA using the four ribonucleoside triphosphates as substrates. The sequence is that of DNA-directed RNA polymerase subunit beta from Panax ginseng (Korean ginseng).